An 899-amino-acid polypeptide reads, in one-letter code: Receptor-like protein kinase At3g21340 (899 aa).

The signal sequence occupies residues 1 to 27; it reads MEYHPQAIRLCALIFISFYALLHLVEA. At 28–522 the chain is on the extracellular side; the sequence is QDQKGFISLD…GAKKMNVVIP (495 aa). 10 N-linked (GlcNAc...) asparagine glycosylation sites follow: Asn-100, Asn-146, Asn-185, Asn-240, Asn-266, Asn-420, Asn-436, Asn-449, Asn-468, and Asn-475. LRR repeat units follow at residues 415-438, 439-461, and 463-485; these read IVTS…QNLT, HLQE…LADI, and SLLV…LLQK. Residues 523–543 form a helical membrane-spanning segment; it reads IVASVAFVVVLGSALAFFFIF. The Cytoplasmic portion of the chain corresponds to 544-899; sequence KKKKTSNSQD…FDIGATPDAR (356 aa). Thr-583 carries the phosphothreonine modification. The region spanning 592–865 is the Protein kinase domain; it reads NNFERVLGKG…QVVIELNECL (274 aa). Residues 598 to 606 and Lys-620 each bind ATP; that span reads LGKGGFGMV. Phosphotyrosine is present on Tyr-665. Asp-717 functions as the Proton acceptor in the catalytic mechanism. Residue Ser-751 is modified to Phosphoserine. Residues Thr-752 and Thr-757 each carry the phosphothreonine modification. Residue Tyr-765 is modified to Phosphotyrosine.

It belongs to the protein kinase superfamily. Ser/Thr protein kinase family. Post-translationally, autophosphorylated on Tyr and Thr residues.

It localises to the cell membrane. It catalyses the reaction L-seryl-[protein] + ATP = O-phospho-L-seryl-[protein] + ADP + H(+). The enzyme catalyses L-threonyl-[protein] + ATP = O-phospho-L-threonyl-[protein] + ADP + H(+). The catalysed reaction is L-tyrosyl-[protein] + ATP = O-phospho-L-tyrosyl-[protein] + ADP + H(+). In terms of biological role, probable receptor with a dual specificity kinase activity acting on both serine/threonine- and tyrosine-containing substrates. In Arabidopsis thaliana (Mouse-ear cress), this protein is Receptor-like protein kinase At3g21340.